The sequence spans 680 residues: 1-deoxy-D-xylulose-5-phosphate synthase (680 aa).

Residues His113 and 154-156 (GHS) each bind thiamine diphosphate. A Mg(2+)-binding site is contributed by Asp185. Thiamine diphosphate contacts are provided by residues 186-187 (GA), Asn214, Phe323, and Glu408. Asn214 is a Mg(2+) binding site.

It belongs to the transketolase family. DXPS subfamily. As to quaternary structure, homodimer. The cofactor is Mg(2+). Thiamine diphosphate serves as cofactor.

It carries out the reaction D-glyceraldehyde 3-phosphate + pyruvate + H(+) = 1-deoxy-D-xylulose 5-phosphate + CO2. The protein operates within metabolic intermediate biosynthesis; 1-deoxy-D-xylulose 5-phosphate biosynthesis; 1-deoxy-D-xylulose 5-phosphate from D-glyceraldehyde 3-phosphate and pyruvate: step 1/1. In terms of biological role, catalyzes the acyloin condensation reaction between C atoms 2 and 3 of pyruvate and glyceraldehyde 3-phosphate to yield 1-deoxy-D-xylulose-5-phosphate (DXP). The sequence is that of 1-deoxy-D-xylulose-5-phosphate synthase from Psychrobacter arcticus (strain DSM 17307 / VKM B-2377 / 273-4).